The sequence spans 237 residues: uncharacterized protein (237 aa).

The signal sequence occupies residues 1–27; it reads MKSFLRKPKFWLLLLGGLSTSSIILSA. A lipid anchor (N-palmitoyl cysteine) is attached at cysteine 28. The S-diacylglycerol cysteine moiety is linked to residue cysteine 28.

It belongs to the MG307/MG309/MG338 family.

The protein resides in the membrane. This is an uncharacterized protein from Mycoplasma pneumoniae (strain ATCC 29342 / M129 / Subtype 1) (Mycoplasmoides pneumoniae).